Consider the following 201-residue polypeptide: Large ribosomal subunit protein uL4 (201 aa).

Residues 44-68 form a disordered region; it reads KAQKTRSEVAGTTKKSKKQKGGGAR.

This sequence belongs to the universal ribosomal protein uL4 family. In terms of assembly, part of the 50S ribosomal subunit.

One of the primary rRNA binding proteins, this protein initially binds near the 5'-end of the 23S rRNA. It is important during the early stages of 50S assembly. It makes multiple contacts with different domains of the 23S rRNA in the assembled 50S subunit and ribosome. In terms of biological role, forms part of the polypeptide exit tunnel. In Xanthomonas oryzae pv. oryzae (strain MAFF 311018), this protein is Large ribosomal subunit protein uL4.